Reading from the N-terminus, the 323-residue chain is Palmitoyltransferase ZDHHC20-B (323 aa).

At 1 to 14 (MAPTHVLRCCQRGL) the chain is on the cytoplasmic side. Residues 15–35 (AWIPVIFIALVVCWSYYAYVV) form a helical membrane-spanning segment. The Lumenal segment spans residues 36–41 (ELCLLV). Residues 42 to 62 (YLVVFHLSFVMFVWSYWKTIF) traverse the membrane as a helical segment. The Cytoplasmic portion of the chain corresponds to 63-157 (TKPANPSKEF…NNCVGFSNYK (95 aa)). Residues 114–164 (RYCDRCQVIKPDRCHHCSACDMCVLKMDHHCPWVNNCVGFSNYKFFILFLT) enclose the DHHC domain. Cys144 acts as the S-palmitoyl cysteine intermediate in catalysis. The helical transmembrane segment at 158–178 (FFILFLTYSLVYCLFIAASVL) threads the bilayer. Residues 179-195 (QYFIKFWTSDLPESHAK) are Lumenal-facing. A helical membrane pass occupies residues 196 to 219 (FHVLFLFFVAAMFCISILSLFTYH). The Cytoplasmic segment spans residues 220–323 (LWLVGKNRST…KQAKKKKTDE (104 aa)).

This sequence belongs to the DHHC palmitoyltransferase family.

The protein resides in the golgi apparatus membrane. Its subcellular location is the cell membrane. It is found in the cytoplasm. It localises to the perinuclear region. The protein localises to the endoplasmic reticulum membrane. The protein resides in the endoplasmic reticulum-Golgi intermediate compartment membrane. The catalysed reaction is L-cysteinyl-[protein] + hexadecanoyl-CoA = S-hexadecanoyl-L-cysteinyl-[protein] + CoA. It catalyses the reaction L-cysteinyl-[protein] + tetradecanoyl-CoA = S-tetradecanoyl-L-cysteinyl-[protein] + CoA. The enzyme catalyses L-cysteinyl-[protein] + octadecanoyl-CoA = S-octadecanoyl-L-cysteinyl-[protein] + CoA. Functionally, palmitoyltransferase that could catalyze the addition of palmitate onto various protein substrates. Catalyzes palmitoylation of Cys residues on protein substrates and has a preference for acyl-CoA with C16 fatty acid chains but may also utilize acyl-CoA with C14 and C18 fatty acid chains. The polypeptide is Palmitoyltransferase ZDHHC20-B (zdhhc20b) (Danio rerio (Zebrafish)).